The chain runs to 337 residues: tRNA(Ile)-lysidine synthase (337 aa).

Position 40 to 45 (40 to 45 (SGGQDS)) interacts with ATP.

It belongs to the tRNA(Ile)-lysidine synthase family.

Its subcellular location is the cytoplasm. It catalyses the reaction cytidine(34) in tRNA(Ile2) + L-lysine + ATP = lysidine(34) in tRNA(Ile2) + AMP + diphosphate + H(+). Ligates lysine onto the cytidine present at position 34 of the AUA codon-specific tRNA(Ile) that contains the anticodon CAU, in an ATP-dependent manner. Cytidine is converted to lysidine, thus changing the amino acid specificity of the tRNA from methionine to isoleucine. In Parasynechococcus marenigrum (strain WH8102), this protein is tRNA(Ile)-lysidine synthase.